The following is a 511-amino-acid chain: MLVTIVASIACFIVGGILSYVLFKYGLKAKYDNVLKEAETEAEVIKKNKLLEVKEKFLNKKADLEKEVALRNQKIQQAENKLKQREMVLSQRQEEIQRKRAEADAVRENLEAQLGIVDKKKEELDKLQHQEIEKLEALSGLSADEAKERLVESLKEEAKTQAQSYINDIMDDAKLTASKEAKRIVIQSIQRVATETAIENSVTVFHIESDEIKGRIIGREGRNIRALEAATGVEIVVDDTPEAIVLSAFDPVRREIARLALHQLVTDGRIHPARIEEVVAKVRKQVEEEIIETGKRTTIDLGIHGLHPELIRIIGKMKYRSSYGQNLLQHARETANLCAVMASELGLNPKKAKRAGLLHDIGKVPDEEPELPHALLGMKLAEKFKEKPDICNAIGAHHDEIEMTSLLAPIVQVCDAISGARPGARREIVEAYIKRLNDLEQLAMSYPGVTKTYAIQAGRELRVIVGADKIDDKQTENLSGEIAKKIQDEMTYPGQVKITVIRETRAVSFAK.

A helical membrane pass occupies residues 3–23 (VTIVASIACFIVGGILSYVLF). Positions 201–261 (SVTVFHIESD…VRREIARLAL (61 aa)) constitute a KH domain. The region spanning 327–420 (LLQHARETAN…VQVCDAISGA (94 aa)) is the HD domain.

It belongs to the RNase Y family.

It localises to the cell membrane. Functionally, endoribonuclease that initiates mRNA decay. In Bacteroides fragilis (strain ATCC 25285 / DSM 2151 / CCUG 4856 / JCM 11019 / LMG 10263 / NCTC 9343 / Onslow / VPI 2553 / EN-2), this protein is Ribonuclease Y.